Here is a 1865-residue protein sequence, read N- to C-terminus: Dedicator of cytokinesis protein 1 (1865 aa).

An SH3 domain is found at 9 to 70; that stretch reads REEKYGVAFY…PASYIHLKEA (62 aa). The region spanning 425–609 is the C2 DOCK-type domain; sequence RNDIYVTLVQ…DSFQISTLVC (185 aa). The region spanning 1207 to 1617 is the DOCKER domain; sequence YKEIEREEMY…VEKEYGVRIM (411 aa). Disordered stretches follow at residues 1619–1716 and 1732–1865; these read SSLD…EFKP and TISP…GIVQ. The span at 1639-1666 shows a compositional bias: low complexity; that stretch reads PSSSRPLSVASVSSLSSDSTPSRPGSDG. Residues 1680–1694 are compositionally biased toward basic and acidic residues; the sequence is RSQDKLDKDDLEKEK. The residue at position 1681 (Ser1681) is a Phosphoserine. A phosphoinositide-binding region spans residues 1687 to 1695; that stretch reads KDDLEKEKK. The segment covering 1695 to 1704 has biased composition (basic residues); the sequence is KDKKKEKRNS. The span at 1705-1716 shows a compositional bias: basic and acidic residues; sequence KHQEIFEKEFKP. 5 positions are modified to phosphoserine: Ser1743, Ser1751, Ser1756, Ser1761, and Ser1764. Over residues 1756–1766 the composition is skewed to low complexity; the sequence is SVSPSSPSSQQ. Residues Thr1767 and Thr1772 each carry the phosphothreonine modification. Residues 1793–1819 are interaction with NCK2 second and third SH3 domain (minor); that stretch reads ADVADVPPPLPLKGSVADYGNLMENQD. The SH3-binding; interaction with CRK motif lies at 1799–1805; the sequence is PPPLPLK. The interaction with NCK2 third SH3 domain (major) stretch occupies residues 1820 to 1836; the sequence is LLGSPTPPPPPPHQRHL. Positions 1824 to 1851 are enriched in pro residues; the sequence is PTPPPPPPHQRHLPPPLPSKTPPPPPPK. Positions 1837–1852 are interaction with NCK2 (minor); it reads PPPLPSKTPPPPPPKT. The short motif at 1838-1843 is the SH3-binding; interaction with CRK element; the sequence is PPLPSK. The span at 1855–1865 shows a compositional bias: polar residues; that stretch reads KQASVDSGIVQ. Ser1858 carries the post-translational modification Phosphoserine.

It belongs to the DOCK family. In terms of assembly, interacts with the SH3 domains of CRK and NCK2 via multiple sites. Interacts with nucleotide-free RAC1 via its DOCKER domain. Interacts with ELMO1, ELMO2 and probably ELMO3 via its SH3 domain. Interacts with ADGRB1. Identified in a complex with AUTS2 and ELMO2. Highly expressed in placenta, lung, kidney, pancreas and ovary. Expressed at intermediate level in thymus, testes and colon.

The protein localises to the cytoplasm. It localises to the membrane. Its function is as follows. Involved in cytoskeletal rearrangements required for phagocytosis of apoptotic cells and cell motility. Along with DOCK1, mediates CRK/CRKL regulation of epithelial and endothelial cell spreading and migration on type IV collagen. Functions as a guanine nucleotide exchange factor (GEF), which activates Rac Rho small GTPases by exchanging bound GDP for free GTP. Its GEF activity may be enhanced by ELMO1. The polypeptide is Dedicator of cytokinesis protein 1 (DOCK1) (Homo sapiens (Human)).